We begin with the raw amino-acid sequence, 889 residues long: TATA box-binding protein-associated factor RNA polymerase I subunit B (889 aa).

Residues 1 to 33 (MAPETNEKCKACGGFNFSMIDGFKYCDRCGTLL) form an RRN7-type zinc finger. Residues cysteine 9, cysteine 12, cysteine 26, and cysteine 29 each contribute to the Zn(2+) site. The interval 35–101 (NFEELEAEEG…DFFSRQALKN (67 aa)) is B-reader. A B-linker region spans residues 102–113 (DELAFPHESTPD). Positions 114-351 (YLYRLGLRLA…SAKEQETKEA (238 aa)) are N-terminal cyclin fold. Residues 229 to 253 (NLDLDSEEDEEEEENPNLNKSMENL) are disordered. The segment covering 230–243 (LDLDSEEDEEEEEN) has biased composition (acidic residues). The segment at 352–510 (MTKVDYAEPY…LLVFRLTFDI (159 aa)) is C-terminal cyclin fold.

Belongs to the RRN7/TAF1B family.

It is found in the nucleus. It localises to the nucleolus. Functionally, component of RNA polymerase I core factor complex that acts as a GTF2B/TFIIB-like factor and plays a key role in multiple steps during transcription initiation such as pre-initiation complex (PIC) assembly and postpolymerase recruitment events in polymerase I (Pol I) transcription. Binds rDNA promoters and plays a role in Pol I recruitment. This chain is TATA box-binding protein-associated factor RNA polymerase I subunit B, found in Caenorhabditis briggsae.